Here is a 364-residue protein sequence, read N- to C-terminus: D-alanine--D-alanine ligase (364 aa).

The 207-residue stretch at 146 to 352 folds into the ATP-grasp domain; sequence KLCAADAGVE…FDELISRLLL (207 aa). 179 to 234 provides a ligand contact to ATP; it reads TERFAFPVFVKPANLGSSVGISKVHNAAELRPALDKACALDAKVLVEETITGREVE. Mg(2+) is bound by residues Asp305, Glu319, and Asn321.

It belongs to the D-alanine--D-alanine ligase family. Requires Mg(2+) as cofactor. Mn(2+) serves as cofactor.

It localises to the cytoplasm. It carries out the reaction 2 D-alanine + ATP = D-alanyl-D-alanine + ADP + phosphate + H(+). It functions in the pathway cell wall biogenesis; peptidoglycan biosynthesis. Its function is as follows. Cell wall formation. The sequence is that of D-alanine--D-alanine ligase from Chlorobaculum parvum (strain DSM 263 / NCIMB 8327) (Chlorobium vibrioforme subsp. thiosulfatophilum).